A 206-amino-acid chain; its full sequence is UPF0502 protein Acid_1185 (206 aa).

Belongs to the UPF0502 family.

The protein is UPF0502 protein Acid_1185 of Solibacter usitatus (strain Ellin6076).